A 528-amino-acid chain; its full sequence is Butyrophilin subfamily 2 member A2 (528 aa).

The N-terminal stretch at 1-29 (MESAAALHFSRPASLLLLLLLSLCALVSA) is a signal peptide. The Extracellular segment spans residues 30 to 249 (QVTVVGPTDP…SFMPSVSPCA (220 aa)). Residues 31 to 142 (VTVVGPTDPI…SYDEAILHLI (112 aa)) form the Ig-like V-type domain. 3 N-linked (GlcNAc...) asparagine glycosylation sites follow: Asn47, Asn115, and Asn121. Cys52 and Cys126 are oxidised to a cystine. In terms of domain architecture, Ig-like C2-type spans 150 to 232 (PLIEMRGHED…NNTLLSQKKE (83 aa)). The chain crosses the membrane as a helical span at residues 250-270 (VALPIVVVILMILFAVCMYWI). Positions 270 to 320 (INKLQKEKKILSGEKEFERETREIAVKELEKERVQKEEELQVKEKLQEELR) form a coiled coil. Residues 271–528 (NKLQKEKKIL…LHRVGTHQSL (258 aa)) lie on the Cytoplasmic side of the membrane. A B30.2/SPRY domain is found at 311–507 (VKEKLQEELR…IFICPALTGA (197 aa)).

Belongs to the immunoglobulin superfamily. BTN/MOG family. In terms of processing, N-glycosylated.

It localises to the membrane. Inhibits the proliferation of CD4 and CD8 T-cells activated by anti-CD3 antibodies, T-cell metabolism and IL2 and IFNG secretion. In Pongo abelii (Sumatran orangutan), this protein is Butyrophilin subfamily 2 member A2 (BTN2A2).